The sequence spans 236 residues: Lectin (236 aa).

N118 carries N-linked (GlcNAc...) asparagine glycosylation.

Belongs to the leguminous lectin family. As to quaternary structure, homodimer of noncovalently associated chains.

D-mannose and D-glucose specific lectin. This chain is Lectin, found in Onobrychis viciifolia (Common sainfoin).